The sequence spans 122 residues: Prefoldin subunit 1 (122 aa).

The residue at position 2 (alanine 2) is an N-acetylalanine.

The protein belongs to the prefoldin subunit beta family. Heterohexamer of two PFD-alpha type and four PFD-beta type subunits.

In terms of biological role, binds specifically to cytosolic chaperonin (c-CPN) and transfers target proteins to it. Binds to nascent polypeptide chain and promotes folding in an environment in which there are many competing pathways for nonnative proteins. In Bos taurus (Bovine), this protein is Prefoldin subunit 1 (PFDN1).